The following is a 318-amino-acid chain: MRPERSFQGLILALQRYWADYGCVILQPYDMEVGAGTFHPATTLRALGPKPWRAAYVQPSRRPKDGRYGENPNRLQHYYQFQVILKPSPPDIQELYLKSLAAIGVDSHLHDIRFVEDDWESPTLGAWGLGWECWCDGMEVSQFTYFQQVAGVECAPVAGELTYGLERLAMYVQGVDRVYDLNFNGRDGADKVTYGDVFLQAEKEYSRHNFEHSDAAMLFEQFKMAESACQKYLAAGWDSDKREAHLMALPAYDQCIKASHAFNLLDARGVISVTERQSYILRVRELAKACGAAWLHTEAGGSSPSTSRQGEAPRGESQ.

The tract at residues Glu298–Gln318 is disordered. Residues Gly300 to Gln309 show a composition bias toward polar residues.

Belongs to the class-II aminoacyl-tRNA synthetase family. As to quaternary structure, tetramer of two alpha and two beta subunits.

The protein resides in the cytoplasm. It carries out the reaction tRNA(Gly) + glycine + ATP = glycyl-tRNA(Gly) + AMP + diphosphate. The polypeptide is Glycine--tRNA ligase alpha subunit (Rhodopseudomonas palustris (strain BisB18)).